Here is a 361-residue protein sequence, read N- to C-terminus: Homer protein homolog 3 (361 aa).

The interval 1–80 is required for interaction with NFATC2; the sequence is MSTAREQPIF…TKTSQKFGQW (80 aa). The WH1 domain maps to 1 to 113; it reads MSTAREQPIF…EKFQEVKEAA (113 aa). The tract at residues 114-169 is disordered; sequence RLAREKSQDGGELTSPALGLASHQVPPSPLVSANGPGEEKLFRSQSADAPGPTERE. 2 positions are modified to phosphoserine: Ser-120 and Ser-159. Coiled-coil stretches lie at residues 191-243 and 254-358; these read ALQD…SEVT and GQSL…RLAE.

The protein belongs to the Homer family. Tetramer. Isoform 1 and isoform 2 encode coiled-coil structures that mediate homo- and heteromultimerization. Interacts with NFATC2; interaction is calcium independent; interaction competes with PPP3CA for NFATC2 binding; interaction is reduced by AKT activation. Interacts with NFATC1 and NFATC4. Interacts with SHANK1; forms a high-order complex at least composed of SHANK1 and HOMER3; the complex formation is regulated by CAMK2A-mediated phosphorylation.

Its subcellular location is the cytoplasm. It is found in the postsynaptic density. The protein resides in the synapse. Postsynaptic density scaffolding protein. Binds and cross-links cytoplasmic regions of GRM1, GRM5, ITPR1, DNM3, RYR1, RYR2, SHANK1 and SHANK3. By physically linking GRM1 and GRM5 with ER-associated ITPR1 receptors, it aids the coupling of surface receptors to intracellular calcium release. Isoforms can be differently regulated and may play an important role in maintaining the plasticity at glutamatergic synapses. Negatively regulates T cell activation by inhibiting the calcineurin-NFAT pathway. Acts by competing with calcineurin/PPP3CA for NFAT protein binding, hence preventing NFAT activation by PPP3CA. The chain is Homer protein homolog 3 from Homo sapiens (Human).